Consider the following 587-residue polypeptide: Putative adhesin (587 aa).

Residues 1–19 form the signal peptide; the sequence is MKFAISTLLIILQAAAVFA. A disulfide bridge links Cys211 with Cys261. Asn239 carries N-linked (GlcNAc...) asparagine glycosylation. Tandem repeats lie at residues 432–455, 466–489, 491–512, and 513–531. The tract at residues 432 to 531 is 4 X 24 AA approximate tandem repeats, Thr-rich; sequence IVTVITKEGG…EGGEKVTTTY (100 aa). Ser562 is lipidated: GPI-anchor amidated serine. Residues 563 to 587 constitute a propeptide, removed in mature form; the sequence is EAQVNLGSKSAVGLLAIVPMLFLAI.

Post-translationally, the GPI-anchor is attached to the protein in the endoplasmic reticulum and serves to target the protein to the cell surface. There, the glucosamine-inositol phospholipid moiety is cleaved off and the GPI-modified mannoprotein is covalently attached via its lipidless GPI glycan remnant to the 1,6-beta-glucan of the outer cell wall layer.

The protein resides in the cell membrane. It localises to the secreted. The protein localises to the cell wall. Putative adhesion protein. May be involved in cell-cell interaction, interacting with other proteins by salt bridges and hydrogen bonds. This Komagataella phaffii (strain ATCC 76273 / CBS 7435 / CECT 11047 / NRRL Y-11430 / Wegner 21-1) (Yeast) protein is Putative adhesin.